The sequence spans 287 residues: MAVGKEIRNQIGSIKSTQKITSAMEMVAASKMRKAQERMQATRPYAEKMRQVIGHIAKSNKDYRHPFMQEREVKRVGYIVVSSDRGLCGGLNTNAFKLLVREMREWKQQGIETDICAIGQKGASFFRNYGGNVVAAVTHLGDSPSADQLIGSVKVMLDSFVEGKIDRLFLISNEFVNTMTQSPKALQLLPLPEGDDEEIGHQWDYIYEPDSRPILDGLMPRYIESQVYQGVVENLACEQAARMIAMKSATDNAGSIIDELQLAYNKARQAAITQEISEIVSGAASVG.

Belongs to the ATPase gamma chain family. F-type ATPases have 2 components, CF(1) - the catalytic core - and CF(0) - the membrane proton channel. CF(1) has five subunits: alpha(3), beta(3), gamma(1), delta(1), epsilon(1). CF(0) has three main subunits: a, b and c.

The protein resides in the cell inner membrane. Its function is as follows. Produces ATP from ADP in the presence of a proton gradient across the membrane. The gamma chain is believed to be important in regulating ATPase activity and the flow of protons through the CF(0) complex. The protein is ATP synthase gamma chain of Marinobacter nauticus (strain ATCC 700491 / DSM 11845 / VT8) (Marinobacter aquaeolei).